Consider the following 83-residue polypeptide: Large ribosomal subunit protein eL31 (83 aa).

The protein belongs to the eukaryotic ribosomal protein eL31 family.

This chain is Large ribosomal subunit protein eL31, found in Methanococcus maripaludis (strain DSM 14266 / JCM 13030 / NBRC 101832 / S2 / LL).